A 387-amino-acid chain; its full sequence is Diels-Alderase ORF3 (387 aa).

Belongs to the Diels-Alderase family.

Its pathway is secondary metabolite biosynthesis. In terms of biological role, diels-Alderase; part of the gene cluster that mediates the biosynthesis of a tyrosine-derived cytochalasan acting as a fungal signal recognized by resistant rice plants and leads to avirulence in Pi33 resistant rice cultivars. The first step in the pathway is catalyzed by the hybrid PKS-NRPS ACE1, assisted by the enoyl reductase RAP1, that are responsible for fusion of the tyrosine precursor and the polyketide backbone. The polyketide synthase module (PKS) of ACE1 is responsible for the synthesis of the polyketide backbone and the downstream nonribosomal peptide synthetase (NRPS) amidates the carboxyl end of the polyketide with the tyrosine precursor. Because ACE1 lacks a designated enoylreductase (ER) domain, the required activity is provided the enoyl reductase RAP1. Reduction by the hydrolyase ORFZ, followed by dehydration and intra-molecular Diels-Alder cyclization by the Diels-Alderase ORF3 then yield the required isoindolone-fused macrocycle. A number of oxidative steps catalyzed by the tailoring enzymes identified within the cluster, including cytochrome P450 monooxygenases CYP1 to CYP4, the FAD-linked oxidoreductase OXR2 and the short-chain dehydrogenase/reductase OXR1, are further required to afford the final cytochalasans that confer avirulence and which have still to be identified. The monooxygenase CYP1 has been shown to be a site-selective C-18 hydroxylase whereas the function of CYP3 is the site-selective epoxidation of the C-6/C-7 olefin that is present in some intermediate compounds. Finally, SYN2 and RAP2 are not required for avirulence in Pi33 resistant rice cultivars. This chain is Diels-Alderase ORF3, found in Pyricularia oryzae (strain 70-15 / ATCC MYA-4617 / FGSC 8958) (Rice blast fungus).